The chain runs to 316 residues: 1-aminocyclopropane-1-carboxylate oxidase 4 (316 aa).

A Fe2OG dioxygenase domain is found at 153–253; the sequence is PNFGTKVSNY…RMSLASFYNP (101 aa). Positions 177, 179, and 234 each coordinate Fe cation.

Belongs to the iron/ascorbate-dependent oxidoreductase family. The cofactor is Fe cation. In terms of tissue distribution, expressed in all of the floral organs examined apart from the sepals.

The enzyme catalyses 1-aminocyclopropane-1-carboxylate + L-ascorbate + O2 = ethene + L-dehydroascorbate + hydrogen cyanide + CO2 + 2 H2O. It participates in alkene biosynthesis; ethylene biosynthesis via S-adenosyl-L-methionine; ethylene from S-adenosyl-L-methionine: step 2/2. This chain is 1-aminocyclopropane-1-carboxylate oxidase 4 (ACO4), found in Solanum lycopersicum (Tomato).